Reading from the N-terminus, the 406-residue chain is Corticosteroid-binding globulin (406 aa).

The signal sequence occupies residues 1–22; sequence MLLTLYACLLWLSTSGLWTSQA. N-linked (GlcNAc...) asparagine glycosylation is found at N95, N119, and N223. Residue Q253 participates in cortisol binding. N-linked (GlcNAc...) asparagine glycosylation is present at N259. Positions 285 and 394 each coordinate cortisol.

Belongs to the serpin family.

The protein localises to the secreted. Major transport protein for glucocorticoids and progestins in the blood of almost all vertebrate species. The sequence is that of Corticosteroid-binding globulin (Serpina6) from Sus scrofa (Pig).